The sequence spans 239 residues: Protein NtpR (239 aa).

One can recognise a Glutamine amidotransferase type-1 domain in the interval 12-239 (LIRATDTFQG…GLFDFFVQEF (228 aa)). The active-site Nucleophile is C113. Catalysis depends on residues H217 and E219.

This chain is Protein NtpR (ntpR), found in Enterococcus hirae (strain ATCC 9790 / DSM 20160 / JCM 8729 / LMG 6399 / NBRC 3181 / NCIMB 6459 / NCDO 1258 / NCTC 12367 / WDCM 00089 / R).